We begin with the raw amino-acid sequence, 566 residues long: Putative ABC transporter ATP-binding protein lp_0149 (566 aa).

2 ABC transporter domains span residues 6–247 (ISFK…GLRE) and 302–536 (LAIE…ASLA). Residues 40-47 (GPSGSGKS) and 335-342 (GQNGTGKS) each bind ATP.

It belongs to the ABC transporter superfamily.

The protein localises to the cell membrane. Its function is as follows. Probably part of an ABC transporter complex. Responsible for energy coupling to the transport system. The polypeptide is Putative ABC transporter ATP-binding protein lp_0149 (Lactiplantibacillus plantarum (strain ATCC BAA-793 / NCIMB 8826 / WCFS1) (Lactobacillus plantarum)).